A 353-amino-acid polypeptide reads, in one-letter code: Holliday junction branch migration complex subunit RuvB (353 aa).

The tract at residues 4–186 is large ATPase domain (RuvB-L); that stretch reads ADRLIAATHS…FGIVQRLEFY (183 aa). Residues isoleucine 25, arginine 26, glycine 67, lysine 70, threonine 71, threonine 72, 133–135, arginine 176, tyrosine 186, and arginine 223 contribute to the ATP site; that span reads EDF. Threonine 71 is a binding site for Mg(2+). A small ATPAse domain (RuvB-S) region spans residues 187-257; it reads STADLATIVS…VADLALNLLD (71 aa). The segment at 260 to 353 is head domain (RuvB-H); sequence EHGFDHQDRR…VDEFLDAVDD (94 aa). 3 residues coordinate DNA: arginine 296, arginine 315, and arginine 320.

Belongs to the RuvB family. Homohexamer. Forms an RuvA(8)-RuvB(12)-Holliday junction (HJ) complex. HJ DNA is sandwiched between 2 RuvA tetramers; dsDNA enters through RuvA and exits via RuvB. An RuvB hexamer assembles on each DNA strand where it exits the tetramer. Each RuvB hexamer is contacted by two RuvA subunits (via domain III) on 2 adjacent RuvB subunits; this complex drives branch migration. In the full resolvosome a probable DNA-RuvA(4)-RuvB(12)-RuvC(2) complex forms which resolves the HJ.

The protein resides in the cytoplasm. The catalysed reaction is ATP + H2O = ADP + phosphate + H(+). In terms of biological role, the RuvA-RuvB-RuvC complex processes Holliday junction (HJ) DNA during genetic recombination and DNA repair, while the RuvA-RuvB complex plays an important role in the rescue of blocked DNA replication forks via replication fork reversal (RFR). RuvA specifically binds to HJ cruciform DNA, conferring on it an open structure. The RuvB hexamer acts as an ATP-dependent pump, pulling dsDNA into and through the RuvAB complex. RuvB forms 2 homohexamers on either side of HJ DNA bound by 1 or 2 RuvA tetramers; 4 subunits per hexamer contact DNA at a time. Coordinated motions by a converter formed by DNA-disengaged RuvB subunits stimulates ATP hydrolysis and nucleotide exchange. Immobilization of the converter enables RuvB to convert the ATP-contained energy into a lever motion, pulling 2 nucleotides of DNA out of the RuvA tetramer per ATP hydrolyzed, thus driving DNA branch migration. The RuvB motors rotate together with the DNA substrate, which together with the progressing nucleotide cycle form the mechanistic basis for DNA recombination by continuous HJ branch migration. Branch migration allows RuvC to scan DNA until it finds its consensus sequence, where it cleaves and resolves cruciform DNA. This is Holliday junction branch migration complex subunit RuvB from Pseudomonas fluorescens (strain Pf0-1).